The sequence spans 259 residues: uncharacterized protein (259 aa).

Residues 1 to 22 (MKHSKKLLLCISFLLITVFISG) form the signal peptide. Residue Cys23 is the site of N-palmitoyl cysteine attachment. Cys23 carries the S-diacylglycerol cysteine lipid modification.

It belongs to the staphylococcal tandem lipoprotein family.

The protein resides in the cell membrane. This is an uncharacterized protein from Staphylococcus epidermidis (strain ATCC 35984 / DSM 28319 / BCRC 17069 / CCUG 31568 / BM 3577 / RP62A).